The primary structure comprises 123 residues: Small ribosomal subunit protein uS13 (123 aa).

The disordered stretch occupies residues 99-123; sequence RGQRTRTNARTRKGPRRTVGVKRKK.

Belongs to the universal ribosomal protein uS13 family. Part of the 30S ribosomal subunit. Forms a loose heterodimer with protein S19. Forms two bridges to the 50S subunit in the 70S ribosome.

Its function is as follows. Located at the top of the head of the 30S subunit, it contacts several helices of the 16S rRNA. In the 70S ribosome it contacts the 23S rRNA (bridge B1a) and protein L5 of the 50S subunit (bridge B1b), connecting the 2 subunits; these bridges are implicated in subunit movement. Contacts the tRNAs in the A and P-sites. This chain is Small ribosomal subunit protein uS13, found in Carboxydothermus hydrogenoformans (strain ATCC BAA-161 / DSM 6008 / Z-2901).